Here is a 206-residue protein sequence, read N- to C-terminus: Small ribosomal subunit protein uS4 (206 aa).

Positions 96-158 constitute an S4 RNA-binding domain; it reads GRLDNVVYRM…AKQQTRIKAA (63 aa).

Belongs to the universal ribosomal protein uS4 family. In terms of assembly, part of the 30S ribosomal subunit. Contacts protein S5. The interaction surface between S4 and S5 is involved in control of translational fidelity.

Its function is as follows. One of the primary rRNA binding proteins, it binds directly to 16S rRNA where it nucleates assembly of the body of the 30S subunit. With S5 and S12 plays an important role in translational accuracy. This Vibrio vulnificus (strain CMCP6) protein is Small ribosomal subunit protein uS4.